A 340-amino-acid chain; its full sequence is Very-long-chain 3-oxoacyl-CoA reductase (340 aa).

The chain crosses the membrane as a helical span at residues 23 to 43 (LQYTFAALGALYVLRGALSFV). NADP(+) contacts are provided by Val68, Arg109, Asp123, Asp131, Asn150, Lys185, Tyr217, Lys221, Val250, and Thr252. Tyr217 acts as the Proton donor in catalysis. Lys221 (lowers pKa of active site Tyr) is an active-site residue.

It belongs to the short-chain dehydrogenases/reductases (SDR) family.

It localises to the endoplasmic reticulum membrane. It catalyses the reaction a very-long-chain (3R)-3-hydroxyacyl-CoA + NADP(+) = a very-long-chain 3-oxoacyl-CoA + NADPH + H(+). Its pathway is lipid metabolism; fatty acid biosynthesis. In terms of biological role, component of the microsomal membrane bound fatty acid elongation system, which produces the 26-carbon very long-chain fatty acids (VLCFA) from palmitate. Catalyzes the reduction of the 3-ketoacyl-CoA intermediate that is formed in each cycle of fatty acid elongation. VLCFAs serve as precursors for ceramide and sphingolipids. In Podospora anserina (strain S / ATCC MYA-4624 / DSM 980 / FGSC 10383) (Pleurage anserina), this protein is Very-long-chain 3-oxoacyl-CoA reductase.